The sequence spans 334 residues: MKKTLIIAEAGVNHNGDLNLAKKLIEIAADSGADFVKFQSFKAKNCISTKAKKAPYQLKTTANDESQLQMVQKLELDLKAHKELILHAKKCNIAFLSTPFDLESVDLLNELGLKIFKIPSGEITNLPYLKKIAKLNKKIILSTGMANLGEIEEALNVLCKNGAKRQNITLLHCTTEYPAPFNEVNLKAMQSLKDAFKLDVGYSDHTRGIHISLAAVALGACVIEKHFTLDKNMSGPDHKASLEPQELKMLCTQIRQIQKAMGDGIKKASKSEQKNINIVRKSLVAKKDIKKGEIFSEGNLTTKRPANGISAMRYEEFLGKIATKNYKEDELIRE.

Residues 282–334 form the AFP-like domain; it reads SLVAKKDIKKGEIFSEGNLTTKRPANGISAMRYEEFLGKIATKNYKEDELIRE.

The enzyme catalyses 2,4-diacetamido-2,4,6-trideoxy-alpha-D-mannopyranose + phosphoenolpyruvate + H2O = N,N-diacetyllegionaminate + phosphate. Functionally, involved in biosynthesis of legionaminic acid (5,7-diamino-3,5,7,9-tetradeoxy-D-glycero-D-galacto-non-2-ulosonic acid)(Leg), a sialic acid-like derivative that is incorporated into flagellin via O-linkage to Ser/Thr. Catalyzes the condensation of 2,4-diacetamido-2,4,6-trideoxymannose with phosphoenolpyruvate (PEP) to give N,N'-diacetyllegionaminic acid. This Campylobacter jejuni subsp. jejuni serotype O:2 (strain ATCC 700819 / NCTC 11168) protein is N,N'-diacetyllegionaminic acid synthase (legI).